The chain runs to 387 residues: Phosphoglycerate kinase (387 aa).

Residues 21–23 (DLN), R36, 59–62 (HLGR), R113, and R146 each bind substrate. ATP is bound by residues K197, E314, and 340–343 (GGDT).

Belongs to the phosphoglycerate kinase family. As to quaternary structure, monomer.

It localises to the cytoplasm. It carries out the reaction (2R)-3-phosphoglycerate + ATP = (2R)-3-phospho-glyceroyl phosphate + ADP. Its pathway is carbohydrate degradation; glycolysis; pyruvate from D-glyceraldehyde 3-phosphate: step 2/5. The chain is Phosphoglycerate kinase from Pseudomonas fluorescens (strain ATCC BAA-477 / NRRL B-23932 / Pf-5).